The following is a 71-amino-acid chain: Lantibiotic Flvbeta.c (71 aa).

Residues 1-33 (MENKFDMEKFKKLAAVVSEDELDTLLDETTVGA) constitute a propeptide, cleaved by FlvT. The segment at residues 35 to 39 (SSNDC) is a cross-link (lanthionine (Ser-Cys); by FlvM2). Position 36 is a 2,3-didehydroalanine (Ser); by FlvM2 (serine 36). 3 cross-links (beta-methyllanthionine (Thr-Cys); by FlvM2) span residues 54 to 60 (TSKFDWC), 62 to 65 (TGAC), and 66 to 69 (TTSC).

Contains LL-lanthionine and DL-beta-methyllanthionine, when coepressed in E.coli with the flavecin synthetase FlvM2.

It is found in the secreted. In terms of biological role, lanthionine-containing peptide antibiotic (lantibiotic) that is probably active on Gram-positive bacteria, since its analog [Del1]Flvbeta.c shows antibacterial activity against M.luteus. This activity is not synergistically enhanced by [Del2]Flvalpha.a, an analog of Flvalpha.a, which is encoded by the same operon than Flvbeta.c. The bactericidal activity of lantibiotics is based on depolarization of energized bacterial cytoplasmic membranes, initiated by the formation of aqueous transmembrane pores. The sequence is that of Lantibiotic Flvbeta.c from Ruminococcus flavefaciens.